A 111-amino-acid chain; its full sequence is Cornifelin (111 aa).

Belongs to the cornifelin family. As to quaternary structure, directly or indirectly cross-linked to CE proteins loricin and involucrin (IVL).

The protein localises to the cytoplasm. Its function is as follows. Part of the insoluble cornified cell envelope (CE) of stratified squamous epithelia. The chain is Cornifelin (CNFN) from Bos taurus (Bovine).